We begin with the raw amino-acid sequence, 109 residues long: Phosphoribosyl-ATP pyrophosphatase (109 aa).

Belongs to the PRA-PH family.

The protein localises to the cytoplasm. It catalyses the reaction 1-(5-phospho-beta-D-ribosyl)-ATP + H2O = 1-(5-phospho-beta-D-ribosyl)-5'-AMP + diphosphate + H(+). It functions in the pathway amino-acid biosynthesis; L-histidine biosynthesis; L-histidine from 5-phospho-alpha-D-ribose 1-diphosphate: step 2/9. In Alkalilimnicola ehrlichii (strain ATCC BAA-1101 / DSM 17681 / MLHE-1), this protein is Phosphoribosyl-ATP pyrophosphatase.